The sequence spans 197 residues: NADH-quinone oxidoreductase subunit C (197 aa).

This sequence belongs to the complex I 30 kDa subunit family. NDH-1 is composed of 14 different subunits. Subunits NuoB, C, D, E, F, and G constitute the peripheral sector of the complex.

Its subcellular location is the cell inner membrane. The enzyme catalyses a quinone + NADH + 5 H(+)(in) = a quinol + NAD(+) + 4 H(+)(out). In terms of biological role, NDH-1 shuttles electrons from NADH, via FMN and iron-sulfur (Fe-S) centers, to quinones in the respiratory chain. The immediate electron acceptor for the enzyme in this species is believed to be ubiquinone. Couples the redox reaction to proton translocation (for every two electrons transferred, four hydrogen ions are translocated across the cytoplasmic membrane), and thus conserves the redox energy in a proton gradient. This is NADH-quinone oxidoreductase subunit C from Rickettsia typhi (strain ATCC VR-144 / Wilmington).